The sequence spans 256 residues: Pimeloyl-[acyl-carrier protein] methyl ester esterase (256 aa).

In terms of domain architecture, AB hydrolase-1 spans 15–242; the sequence is HLVLLHGWGL…AAHAPFISHP (228 aa). Substrate is bound by residues Trp-22, 82 to 83, and 143 to 147; these read SL and FLALQ. Ser-82 functions as the Nucleophile in the catalytic mechanism. Active-site residues include Asp-207 and His-235. His-235 is a binding site for substrate.

Belongs to the AB hydrolase superfamily. Carboxylesterase BioH family. Monomer.

It localises to the cytoplasm. It catalyses the reaction 6-carboxyhexanoyl-[ACP] methyl ester + H2O = 6-carboxyhexanoyl-[ACP] + methanol + H(+). It participates in cofactor biosynthesis; biotin biosynthesis. In terms of biological role, the physiological role of BioH is to remove the methyl group introduced by BioC when the pimeloyl moiety is complete. It allows to synthesize pimeloyl-ACP via the fatty acid synthetic pathway through the hydrolysis of the ester bonds of pimeloyl-ACP esters. In Escherichia fergusonii (strain ATCC 35469 / DSM 13698 / CCUG 18766 / IAM 14443 / JCM 21226 / LMG 7866 / NBRC 102419 / NCTC 12128 / CDC 0568-73), this protein is Pimeloyl-[acyl-carrier protein] methyl ester esterase.